An 88-amino-acid polypeptide reads, in one-letter code: FXYD domain-containing ion transport regulator 3 (88 aa).

A signal peptide spans 1–17 (MHEVALSVLILLAGLSA). Over 18-38 (LDANDPEDKNSPFYYDWHSLR) the chain is Extracellular. Residues 39–59 (VGGLICAGTPCALGIIILLSG) traverse the membrane as a helical segment. Residues 60-88 (KCKCKFSQKPSHRPGDAPPLITPGSAHDC) are Cytoplasmic-facing. The disordered stretch occupies residues 66-88 (SQKPSHRPGDAPPLITPGSAHDC).

It belongs to the FXYD family. In terms of assembly, regulatory subunit of the sodium/potassium-transporting ATPase which is composed of a catalytic alpha subunit, a non-catalytic beta subunit and an additional regulatory subunit. Interacts with catalytic alpha subunit ATP1A1. Also interacts with non-catalytic beta subunit ATP1B1. Interacts with the alpha1-beta1, alpha2-beta1 and alpha3-beta1 NKA isozymes. In terms of processing, glutathionylated.

The protein localises to the cell membrane. Associates with and regulates the activity of the sodium/potassium-transporting ATPase (NKA) which transports Na(+) out of the cell and K(+) into the cell. Reduces glutathionylation of the NKA beta-1 subunit ATP1B1, thus reversing glutathionylation-mediated inhibition of ATP1B1. Induces a hyperpolarization-activated chloride current when expressed in Xenopus oocytes. The chain is FXYD domain-containing ion transport regulator 3 (FXYD3) from Sus scrofa (Pig).